Consider the following 141-residue polypeptide: ATP synthase F(0) complex subunit C2, mitochondrial (141 aa).

A mitochondrion-targeting transit peptide spans Met1 to Arg66. Residues Val82–Tyr102 form a helical membrane-spanning segment. Lys109 carries the post-translational modification N6,N6,N6-trimethyllysine. A helical membrane pass occupies residues Ile117–Ile137.

The protein belongs to the ATPase C chain family. F-type ATPases have 2 components, CF(1) - the catalytic core - and CF(0) - the membrane proton channel. CF(1) has five subunits: alpha(3), beta(3), gamma(1), delta(1), epsilon(1). CF(0) has three main subunits: a, b and c. Interacts with DNAJC30; interaction is direct. In terms of processing, trimethylated by ATPSCKMT at Lys-109. Methylation is required for proper incorporation of the C subunit into the ATP synthase complex and mitochondrial respiration.

The protein resides in the mitochondrion membrane. Its function is as follows. Mitochondrial membrane ATP synthase (F(1)F(0) ATP synthase or Complex V) produces ATP from ADP in the presence of a proton gradient across the membrane which is generated by electron transport complexes of the respiratory chain. F-type ATPases consist of two structural domains, F(1) - containing the extramembraneous catalytic core and F(0) - containing the membrane proton channel, linked together by a central stalk and a peripheral stalk. During catalysis, ATP synthesis in the catalytic domain of F(1) is coupled via a rotary mechanism of the central stalk subunits to proton translocation. Part of the complex F(0) domain. A homomeric c-ring of probably 10 subunits is part of the complex rotary element. The protein is ATP synthase F(0) complex subunit C2, mitochondrial of Homo sapiens (Human).